An 810-amino-acid polypeptide reads, in one-letter code: Hemoglobin-haptoglobin utilization protein B (810 aa).

The signal sequence occupies residues Met-1–Ala-22. Residues Asn-34–Lys-166 form the TBDR plug domain. The TBDR beta-barrel domain occupies Asp-175 to Phe-810. The short motif at Gln-793–Phe-810 is the TonB C-terminal box element.

Belongs to the TonB-dependent receptor family.

The protein resides in the cell outer membrane. Its function is as follows. Acts as a receptor for hemoglobin or the hemoglobin/haptoglobin complex and is required for heme uptake. The sequence is that of Hemoglobin-haptoglobin utilization protein B (hpuB) from Neisseria meningitidis serogroup A / serotype 4A (strain DSM 15465 / Z2491).